The primary structure comprises 385 residues: S-adenosylmethionine synthase (385 aa).

ATP is bound at residue His15. Asp17 provides a ligand contact to Mg(2+). Glu43 serves as a coordination point for K(+). L-methionine is bound by residues Glu56 and Gln99. The segment at 99 to 109 (QSPDINKGINN) is flexible loop. ATP-binding positions include 164–166 (DAK), 230–231 (RF), Asp239, 245–246 (RK), Ala262, and Lys266. Asp239 is a binding site for L-methionine. Residue Lys270 coordinates L-methionine.

This sequence belongs to the AdoMet synthase family. Homotetramer; dimer of dimers. Mg(2+) is required as a cofactor. K(+) serves as cofactor.

The protein resides in the cytoplasm. It catalyses the reaction L-methionine + ATP + H2O = S-adenosyl-L-methionine + phosphate + diphosphate. It functions in the pathway amino-acid biosynthesis; S-adenosyl-L-methionine biosynthesis; S-adenosyl-L-methionine from L-methionine: step 1/1. In terms of biological role, catalyzes the formation of S-adenosylmethionine (AdoMet) from methionine and ATP. The overall synthetic reaction is composed of two sequential steps, AdoMet formation and the subsequent tripolyphosphate hydrolysis which occurs prior to release of AdoMet from the enzyme. The chain is S-adenosylmethionine synthase from Baumannia cicadellinicola subsp. Homalodisca coagulata.